Here is a 437-residue protein sequence, read N- to C-terminus: Proton/glutamate-aspartate symporter (437 aa).

Over 1-5 the chain is Cytoplasmic; the sequence is MKNIK. A helical transmembrane segment spans residues 6–26; the sequence is FSLAWQILFAMVLGILLGSYL. Residues 27-50 are Periplasmic-facing; that stretch reads HYHSDSRDWLVVNLLSPAGDIFIH. A helical transmembrane segment spans residues 51-71; sequence LIKMIVVPIVISTLVVGIAGV. The Cytoplasmic portion of the chain corresponds to 72–84; sequence GDAKQLGRIGAKT. Residues 85-105 traverse the membrane as a helical segment; it reads IIYFEVITTVAIILGITLANV. Residues 106–159 are Periplasmic-facing; the sequence is FQPGAGVDMSQLATVDISKYQSTTEAVQSSSHGIMGTILSLVPTNIVASMAKGE. The helical transmembrane segment at 160–180 threads the bilayer; sequence MLPIIFFSVLFGLGLSSLPAT. Residues 181 to 210 lie on the Cytoplasmic side of the membrane; sequence HREPLVTVFRSISETMFKVTHMVMRYAPVG. The helical transmembrane segment at 211 to 231 threads the bilayer; sequence VFALIAVTVANFGFSSLWPLA. A topological domain (periplasmic) is located at residue Lys-232. The helical transmembrane segment at 233–253 threads the bilayer; the sequence is LVLLVHFAILFFALVVLGIVA. Residues 254–292 lie on the Cytoplasmic side of the membrane; it reads RLCGLSVWILIRILKDELILAYSTASSESVLPRIIEKME. Residues 293-313 traverse the membrane as a helical segment; the sequence is AYGAPVSITSFVVPTGYSFNL. Topologically, residues 314–324 are periplasmic; it reads DGSTLYQSIAA. Residues 325–345 traverse the membrane as a helical segment; the sequence is IFIAQLYGIDLSIWQEIILVL. Residues 346 to 361 lie on the Cytoplasmic side of the membrane; sequence TLMVTSKGIAGVPGVS. Residues 362-382 form a helical membrane-spanning segment; the sequence is FVVLLATLGSVGIPLEGLAFI. Residues 383-387 lie on the Periplasmic side of the membrane; the sequence is AGVDR. A helical transmembrane segment spans residues 388-408; the sequence is ILDMARTALNVVGNALAVLVI. Residues 409–437 are Cytoplasmic-facing; it reads AKWEHKFDRKKALAYEREVLGKFDKTADQ.

Belongs to the dicarboxylate/amino acid:cation symporter (DAACS) (TC 2.A.23) family. GltP subfamily.

It localises to the cell inner membrane. Its activity is regulated as follows. Glutamate uptake is inhibited by L-cysteate and beta-hydroxyaspartate. Inhibited by the uncoupler carbonylcyanide m-chlorophenylhydrazone (CCCP). Functionally, catalyzes the proton-dependent, binding-protein-independent transport of glutamate and aspartate. The chain is Proton/glutamate-aspartate symporter from Escherichia coli (strain K12).